A 265-amino-acid polypeptide reads, in one-letter code: Uroporphyrinogen-III synthase (265 aa).

This sequence belongs to the uroporphyrinogen-III synthase family. As to quaternary structure, monomer.

The protein localises to the cytoplasm. The protein resides in the cytosol. The enzyme catalyses hydroxymethylbilane = uroporphyrinogen III + H2O. It participates in porphyrin-containing compound metabolism; protoporphyrin-IX biosynthesis; coproporphyrinogen-III from 5-aminolevulinate: step 3/4. In terms of biological role, catalyzes cyclization of the linear tetrapyrrole, hydroxymethylbilane, to the macrocyclic uroporphyrinogen III, the branch point for the various sub-pathways leading to the wide diversity of porphyrins. Porphyrins act as cofactors for a multitude of enzymes that perform a variety of processes within the cell such as methionine synthesis (vitamin B12) or oxygen transport (heme). This chain is Uroporphyrinogen-III synthase (Uros), found in Mus musculus (Mouse).